The sequence spans 837 residues: Tuftelin-interacting protein 11 (837 aa).

Basic and acidic residues-rich tracts occupy residues 1–13 (MSLS…GEGR) and 53–64 (VWAERDSDDERP). 3 disordered regions span residues 1 to 21 (MSLS…DDER), 53 to 72 (VWAE…KRAR), and 85 to 133 (LKKG…KGFA). 3 positions are modified to phosphoserine: Ser2, Ser59, and Ser98. Over residues 91-102 (EEAELEDSDDEE) the composition is skewed to acidic residues. Residues 103-116 (RPVKQDDFPKDFGP) are compositionally biased toward basic and acidic residues. Ser144 carries the post-translational modification Phosphoserine. Residues 149–195 (TKGIGQKLLQKMGYVPGRGLGKNAQGIINPIEAKQRKGKGAVGAYGS) enclose the G-patch domain. The interval 179–236 (IEAKQRKGKGAVGAYGSERTTQSMQDFPVVDSEEEAEEEFQKGLSQWRKDPSGSKKKP) is disordered. Ser210 carries the phosphoserine modification. The Nuclear localization signal signature appears at 700–705 (VKDKFN). The required for nuclear speckle localization stretch occupies residues 710 to 734 (IMNRAVSSNVGAYMQPGARENIAYL).

It belongs to the TFP11/STIP family. Identified in the spliceosome C complex. Found in the Intron Large (IL) complex, a post-mRNA release spliceosomal complex containing the excised intron, U2, U5 and U6 snRNPs, and splicing factors. Interacts with TUFT1. Interacts with DHX15; indicative for a recruitment of DHX15 to the IL complex. Interacts with GCFC2.

The protein resides in the cytoplasm. It is found in the nucleus. Functionally, involved in pre-mRNA splicing, specifically in spliceosome disassembly during late-stage splicing events. Intron turnover seems to proceed through reactions in two lariat-intron associated complexes termed Intron Large (IL) and Intron Small (IS). In cooperation with DHX15 seems to mediate the transition of the U2, U5 and U6 snRNP-containing IL complex to the snRNP-free IS complex leading to efficient debranching and turnover of excised introns. May play a role in the differentiation of ameloblasts and odontoblasts or in the forming of the enamel extracellular matrix. This is Tuftelin-interacting protein 11 (TFIP11) from Macaca fascicularis (Crab-eating macaque).